We begin with the raw amino-acid sequence, 654 residues long: Glycogen debranching enzyme (654 aa).

The active-site Nucleophile is the Asp336. Residue Glu371 is the Proton donor of the active site. A disordered region spans residues 459–484 (EANGEENRDGTNSNYSDNHGKEGLGG).

This sequence belongs to the glycosyl hydrolase 13 family.

The enzyme catalyses Hydrolysis of (1-&gt;6)-alpha-D-glucosidic linkages to branches with degrees of polymerization of three or four glucose residues in limit dextrin.. It functions in the pathway glycan degradation; glycogen degradation. Functionally, removes maltotriose and maltotetraose chains that are attached by 1,6-alpha-linkage to the limit dextrin main chain, generating a debranched limit dextrin. This Salmonella typhi protein is Glycogen debranching enzyme.